We begin with the raw amino-acid sequence, 375 residues long: POU domain, class 3, transcription factor 1 (375 aa).

Disordered regions lie at residues 1–29 (MAAT…RMHQ), 56–139 (MSLT…QPLI), and 151–200 (MLGP…PSSD). Composition is skewed to polar residues over residues 107–117 (VHQQTPSSHAW), 130–139 (PGSNSHQPLI), and 151–160 (MLGPQASSLH). A compositionally biased stretch (basic and acidic residues) spans 162 to 171 (SMRDPLHDDP). The POU-specific domain occupies 194–268 (EDAPSSDDLE…LLNKWLEETD (75 aa)). The homeobox DNA-binding region spans 286 to 345 (KRKKRTSIEVGVKGALENHFLKCPKPSAHEITSLADSLQLEKEVVRVWFCNRRQKEKRMT).

It belongs to the POU transcription factor family. Class-3 subfamily.

It localises to the nucleus. Its function is as follows. Acts as a transcription factor. May play a role in neuronal differentiation. In Xenopus tropicalis (Western clawed frog), this protein is POU domain, class 3, transcription factor 1.